A 145-amino-acid polypeptide reads, in one-letter code: Probable inactive ribonuclease-like protein 12 (145 aa).

An N-terminal signal peptide occupies residues Met-1 to Thr-19. Asn-88 carries N-linked (GlcNAc...) asparagine glycosylation.

Belongs to the pancreatic ribonuclease family.

Its subcellular location is the secreted. In terms of biological role, does not exhibit any ribonuclease activity. The chain is Probable inactive ribonuclease-like protein 12 (Rnase12) from Rattus norvegicus (Rat).